The sequence spans 121 residues: uncharacterized protein (121 aa).

The HTH gntR-type domain maps to 9–77; the sequence is KPIYLQIADQ…RGQGTFIAEK (69 aa). The H-T-H motif DNA-binding region spans 37–56; it reads VREMAIQTKVNPNTIQRTYS.

This is an uncharacterized protein from Bacillus subtilis (strain 168).